A 152-amino-acid chain; its full sequence is Large ribosomal subunit protein uL15 (152 aa).

A disordered region spans residues 1–56 (MTSTLNTLKSNLGSRKKKLRKGRGIAAGQGASCGFGMRGQKSRSGRPTRPGFEGGQ). Positions 14–23 (SRKKKLRKGR) are enriched in basic residues. Residues 25 to 37 (IAAGQGASCGFGM) show a composition bias toward gly residues.

The protein belongs to the universal ribosomal protein uL15 family. In terms of assembly, part of the 50S ribosomal subunit.

In terms of biological role, binds to the 23S rRNA. In Prochlorococcus marinus (strain MIT 9515), this protein is Large ribosomal subunit protein uL15.